A 343-amino-acid chain; its full sequence is 3-dehydroquinate synthase (343 aa).

Residues 61 to 66 (SGEKYK), 95 to 99 (GVISD), 119 to 120 (TT), Lys132, Lys141, and 159 to 162 (FLKT) each bind NAD(+). Residues Glu174, His231, and His248 each contribute to the Zn(2+) site.

It belongs to the sugar phosphate cyclases superfamily. Dehydroquinate synthase family. Requires Co(2+) as cofactor. It depends on Zn(2+) as a cofactor. The cofactor is NAD(+).

Its subcellular location is the cytoplasm. It catalyses the reaction 7-phospho-2-dehydro-3-deoxy-D-arabino-heptonate = 3-dehydroquinate + phosphate. Its pathway is metabolic intermediate biosynthesis; chorismate biosynthesis; chorismate from D-erythrose 4-phosphate and phosphoenolpyruvate: step 2/7. Functionally, catalyzes the conversion of 3-deoxy-D-arabino-heptulosonate 7-phosphate (DAHP) to dehydroquinate (DHQ). This Helicobacter pylori (strain HPAG1) protein is 3-dehydroquinate synthase.